The chain runs to 227 residues: Nucleoside triphosphate pyrophosphatase (227 aa).

Residue aspartate 77 is the Proton acceptor of the active site.

The protein belongs to the Maf family. The cofactor is a divalent metal cation.

The protein localises to the cytoplasm. The catalysed reaction is a ribonucleoside 5'-triphosphate + H2O = a ribonucleoside 5'-phosphate + diphosphate + H(+). It catalyses the reaction a 2'-deoxyribonucleoside 5'-triphosphate + H2O = a 2'-deoxyribonucleoside 5'-phosphate + diphosphate + H(+). Functionally, nucleoside triphosphate pyrophosphatase. May have a dual role in cell division arrest and in preventing the incorporation of modified nucleotides into cellular nucleic acids. The protein is Nucleoside triphosphate pyrophosphatase of Rickettsia typhi (strain ATCC VR-144 / Wilmington).